A 454-amino-acid chain; its full sequence is Chromosomal replication initiator protein DnaA (454 aa).

The interval 1–77 (MASLNENQKF…GFEVFGRMID (77 aa)) is domain I, interacts with DnaA modulators. Residues 77–115 (DYELYANDELTDIELRRLNNQSPVDEPLSVAKPTSPLVS) form a domain II region. The domain III, AAA+ region stretch occupies residues 116 to 332 (GLNEKYNFEN…GALNRVEFVA (217 aa)). 4 residues coordinate ATP: Gly160, Gly162, Lys163, and Thr164. Residues 333-454 (RANGISIVDI…KDIDSIKRKF (122 aa)) form a domain IV, binds dsDNA region.

It belongs to the DnaA family. In terms of assembly, oligomerizes as a right-handed, spiral filament on DNA at oriC.

It is found in the cytoplasm. Functionally, plays an essential role in the initiation and regulation of chromosomal replication. ATP-DnaA binds to the origin of replication (oriC) to initiate formation of the DNA replication initiation complex once per cell cycle. Binds the DnaA box (a 9 base pair repeat at the origin) and separates the double-stranded (ds)DNA. Forms a right-handed helical filament on oriC DNA; dsDNA binds to the exterior of the filament while single-stranded (ss)DNA is stabiized in the filament's interior. The ATP-DnaA-oriC complex binds and stabilizes one strand of the AT-rich DNA unwinding element (DUE), permitting loading of DNA polymerase. After initiation quickly degrades to an ADP-DnaA complex that is not apt for DNA replication. Binds acidic phospholipids. The polypeptide is Chromosomal replication initiator protein DnaA (Lactococcus lactis subsp. cremoris (strain MG1363)).